A 353-amino-acid chain; its full sequence is Photosystem II D2 protein (353 aa).

An N-acetylthreonine modification is found at Thr-2. At Thr-2 the chain carries Phosphothreonine. Residues 41–61 (CAYFALGGWFTGTTFVTSWYT) traverse the membrane as a helical segment. His-118 is a binding site for chlorophyll a. A helical transmembrane segment spans residues 125-141 (GFMLRQFELARSVQLRP). The pheophytin a site is built by Gln-130 and Asn-143. Residues 153–166 (VFVSVFLIYPLGQS) form a helical membrane-spanning segment. His-198 serves as a coordination point for chlorophyll a. The helical transmembrane segment at 208–228 (AALLCAIHGATVENTLFEDGD) threads the bilayer. 2 residues coordinate a plastoquinone: His-215 and Phe-262. Fe cation is bound at residue His-215. His-269 is a Fe cation binding site. A helical membrane pass occupies residues 279–295 (GLWMSALGVVGLALNLR).

This sequence belongs to the reaction center PufL/M/PsbA/D family. As to quaternary structure, PSII is composed of 1 copy each of membrane proteins PsbA, PsbB, PsbC, PsbD, PsbE, PsbF, PsbH, PsbI, PsbJ, PsbK, PsbL, PsbM, PsbT, PsbX, PsbY, PsbZ, Psb30/Ycf12, at least 3 peripheral proteins of the oxygen-evolving complex and a large number of cofactors. It forms dimeric complexes. Requires The D1/D2 heterodimer binds P680, chlorophylls that are the primary electron donor of PSII, and subsequent electron acceptors. It shares a non-heme iron and each subunit binds pheophytin, quinone, additional chlorophylls, carotenoids and lipids. There is also a Cl(-1) ion associated with D1 and D2, which is required for oxygen evolution. The PSII complex binds additional chlorophylls, carotenoids and specific lipids. as cofactor.

The protein resides in the plastid. It localises to the chloroplast thylakoid membrane. The enzyme catalyses 2 a plastoquinone + 4 hnu + 2 H2O = 2 a plastoquinol + O2. Its function is as follows. Photosystem II (PSII) is a light-driven water:plastoquinone oxidoreductase that uses light energy to abstract electrons from H(2)O, generating O(2) and a proton gradient subsequently used for ATP formation. It consists of a core antenna complex that captures photons, and an electron transfer chain that converts photonic excitation into a charge separation. The D1/D2 (PsbA/PsbD) reaction center heterodimer binds P680, the primary electron donor of PSII as well as several subsequent electron acceptors. D2 is needed for assembly of a stable PSII complex. This chain is Photosystem II D2 protein, found in Nymphaea alba (White water-lily).